Here is a 130-residue protein sequence, read N- to C-terminus: uncharacterized protein (130 aa).

Disordered regions lie at residues 1 to 47 (MTFY…QSNT) and 78 to 130 (QTLE…SESS). A compositionally biased stretch (polar residues) spans 13 to 33 (QWKQLQTQQNKKNSPRPVTSS). The segment covering 86-110 (PSKHKRKRTKYRRTKKSKHHSRKKT) has biased composition (basic residues). Basic and acidic residues predominate over residues 117 to 130 (SERDSTTGRESESS).

This is an uncharacterized protein from Torque teno mini virus 1 (isolate TLMV-CBD279).